The sequence spans 270 residues: Imidazole glycerol phosphate synthase subunit HisF (270 aa).

Active-site residues include Asp-11 and Asp-130.

The protein belongs to the HisA/HisF family. As to quaternary structure, heterodimer of HisH and HisF.

It is found in the cytoplasm. The enzyme catalyses 5-[(5-phospho-1-deoxy-D-ribulos-1-ylimino)methylamino]-1-(5-phospho-beta-D-ribosyl)imidazole-4-carboxamide + L-glutamine = D-erythro-1-(imidazol-4-yl)glycerol 3-phosphate + 5-amino-1-(5-phospho-beta-D-ribosyl)imidazole-4-carboxamide + L-glutamate + H(+). The protein operates within amino-acid biosynthesis; L-histidine biosynthesis; L-histidine from 5-phospho-alpha-D-ribose 1-diphosphate: step 5/9. IGPS catalyzes the conversion of PRFAR and glutamine to IGP, AICAR and glutamate. The HisF subunit catalyzes the cyclization activity that produces IGP and AICAR from PRFAR using the ammonia provided by the HisH subunit. The protein is Imidazole glycerol phosphate synthase subunit HisF of Sorangium cellulosum (strain So ce56) (Polyangium cellulosum (strain So ce56)).